The sequence spans 518 residues: MEDNKLILALGLSVLFVLLSKLVSSAMKPRLNLPPGPWTLPLIGSLHHLVMKSPQIHRSLRALSEKHGPIMQLWMGEVPAVIVSSPAVAEEVLKHQDLRFADRHLTATIEEVSFGGRDVTFAPYSERWRHLRKICMQELLTAARVRSFQGVREREVARLVRELAADAGAGGDAGVNLNERISKLANDIVMVSSVGGRCSHRDEFLDALEVAKKQITWLSVADLFPSSKLARMVAVAPRKGLASRKRMELVIRRIIQERKDQLMDDSAAGAGEAAAGKDCFLDVLLRLQKEGGTPVPVTDEIIVVLLFDMFTGASETSPTVLIWILAELMRCPRVMAKAQAEVRQAAVGKTRITENDIVGLSYLKMVIKEALRLHSPAPLLNPRKCRETTQVMGYDIPKGTSVFVNMWAICRDPNYWEDPEEFKPERFENNCVDFKGNNFEFLPFGSGRRICPGINLGLANLELALASLLYHFDWKLPNGMLPKDLDMQETPGIVAAKLTTLNMCPVTQIAPSSAEDAS.

Residues 6–26 (LILALGLSVLFVLLSKLVSSA) form a helical membrane-spanning segment. Cysteine 451 serves as a coordination point for heme.

The protein belongs to the cytochrome P450 family. It depends on heme as a cofactor.

Its subcellular location is the membrane. The catalysed reaction is ent-cassa-12,15-diene + 3 reduced [NADPH--hemoprotein reductase] + 3 O2 = ent-3beta-hydroxycassa-12,15-dien-2-one + 3 oxidized [NADPH--hemoprotein reductase] + 4 H2O + 3 H(+). Enzyme of the diterpenoid metabolism involved in the biosynthesis of antibacterial oryzalides such as phytocassane. Catalyzes the hydroxylation of ent-cassa-12,15-diene to form ent-3beta-hydroxycassa-12,15-dien-2-one. This Oryza sativa subsp. japonica (Rice) protein is Ent-cassadiene hydroxylase (CYP71Z7).